Reading from the N-terminus, the 135-residue chain is Congerin-1 (135 aa).

Serine 1 bears the N-acetylserine mark. The Galectin domain maps to 3–135; it reads GLQVKNFDFT…GDARLTLVKE (133 aa). 70–76 contributes to the a beta-D-galactoside binding site; that stretch reads WETEQRS.

As to quaternary structure, homodimer.

Functionally, this protein binds beta-galactoside. Its physiological function is not yet known. The polypeptide is Congerin-1 (Conger myriaster (Conger eel)).